Reading from the N-terminus, the 477-residue chain is Glycogen synthase (477 aa).

Lysine 15 provides a ligand contact to ADP-alpha-D-glucose.

It belongs to the glycosyltransferase 1 family. Bacterial/plant glycogen synthase subfamily.

The enzyme catalyses [(1-&gt;4)-alpha-D-glucosyl](n) + ADP-alpha-D-glucose = [(1-&gt;4)-alpha-D-glucosyl](n+1) + ADP + H(+). Its pathway is glycan biosynthesis; glycogen biosynthesis. Synthesizes alpha-1,4-glucan chains using ADP-glucose. This chain is Glycogen synthase, found in Streptococcus pneumoniae (strain Hungary19A-6).